The sequence spans 142 residues: Small heat shock protein IbpB (142 aa).

The sHSP domain maps to A26–R137.

The protein belongs to the small heat shock protein (HSP20) family. Homodimer. Forms homomultimers of about 100-150 subunits at optimal growth temperatures. Conformation changes to oligomers at high temperatures or high ionic concentrations. The decrease in size of the multimers is accompanied by an increase in chaperone activity.

It is found in the cytoplasm. Its function is as follows. Associates with aggregated proteins, together with IbpA, to stabilize and protect them from irreversible denaturation and extensive proteolysis during heat shock and oxidative stress. Aggregated proteins bound to the IbpAB complex are more efficiently refolded and reactivated by the ATP-dependent chaperone systems ClpB and DnaK/DnaJ/GrpE. Its activity is ATP-independent. This chain is Small heat shock protein IbpB, found in Shigella flexneri serotype 5b (strain 8401).